Here is a 103-residue protein sequence, read N- to C-terminus: Co-chaperonin GroES (103 aa).

It belongs to the GroES chaperonin family. In terms of assembly, heptamer of 7 subunits arranged in a ring. Interacts with the chaperonin GroEL.

The protein resides in the cytoplasm. Its function is as follows. Together with the chaperonin GroEL, plays an essential role in assisting protein folding. The GroEL-GroES system forms a nano-cage that allows encapsulation of the non-native substrate proteins and provides a physical environment optimized to promote and accelerate protein folding. GroES binds to the apical surface of the GroEL ring, thereby capping the opening of the GroEL channel. This is Co-chaperonin GroES from Thermosynechococcus vestitus (strain NIES-2133 / IAM M-273 / BP-1).